We begin with the raw amino-acid sequence, 161 residues long: MSQLTHINAAGEAHMVDVSAKAETVREARAEAFVTMHSETLAMIIDGKHHKGDVFATARIAGIQAAKRTWELIPLCHPLLLSKVEVQLQAESEHNRVRIESLCRLTGKTGVEMEALTAASVAALTIYDMCKAVQKDMVIGPVRLLAKSGGNSGDFKVDTHD.

Substrate contacts are provided by residues 75–77 (LCH) and 113–114 (ME). Asp-128 is an active-site residue.

It belongs to the MoaC family. Homohexamer; trimer of dimers.

It carries out the reaction (8S)-3',8-cyclo-7,8-dihydroguanosine 5'-triphosphate = cyclic pyranopterin phosphate + diphosphate. The protein operates within cofactor biosynthesis; molybdopterin biosynthesis. Functionally, catalyzes the conversion of (8S)-3',8-cyclo-7,8-dihydroguanosine 5'-triphosphate to cyclic pyranopterin monophosphate (cPMP). The chain is Cyclic pyranopterin monophosphate synthase from Salmonella arizonae (strain ATCC BAA-731 / CDC346-86 / RSK2980).